The chain runs to 139 residues: uncharacterized protein (139 aa).

The next 2 membrane-spanning stretches (helical) occupy residues 71–91 (LFSA…ATLL) and 97–117 (ENEL…FVMV).

The protein belongs to the RseC family.

It localises to the cell inner membrane. This is an uncharacterized protein from Haemophilus influenzae (strain ATCC 51907 / DSM 11121 / KW20 / Rd).